A 591-amino-acid polypeptide reads, in one-letter code: MSSYDRRFADPNSYRQRSGAPVGSSQPMDPSAAPYNPRYTGGGGGYGPSPVMAGDNSGYNRYPSFQPPSGGFSVGRGGGRGGYGQYGDRNGGGNWGGGGGRGGSSKRELDSVSLPKQNFGNLVHFEKNFYVESPTVQAMTEQDVAMYRTERDISVEGRDVPKPMKMFQDANFPDNILEAIAKLGFTEPTPIQAQGWPMALKGRDLIGIAETGSGKTLAYLLPALVHVSAQPRLGQDDGPIVLILAPTRELAVQIQEESRKFGLRSGVRSTCIYGGAPKGPQIRDLRRGVEIVIATPGRLIDMLECQHTNLKRVTYLVLDEADRMLDMGFEPQIRKIVSQIRPDRQTLLWSATWPREVETLARQFLRDPYKAIIGSTDLKANQSINQVIEIVPTPEKYNRLLTLLKQLMDGSKILIFVETKRGCDQVTRQLRMDGWPALAIHGDKTQSERDRVLAEFKSGRSPIMTATDVAARGLDVKDIKCVVNYDFPNTLEDYIHRIGRTGRAGAKGMAFTFFTHDNAKFARELVKILQEAGQVVPPTLSALVRSSGSGYGGSGGGRNFRPRGGGRGGGFGDKRSRSTSNFVPHGGKRTW.

The disordered stretch occupies residues 1 to 109 (MSSYDRRFAD…GRGGSSKREL (109 aa)). The segment covering 72-103 (FSVGRGGGRGGYGQYGDRNGGGNWGGGGGRGG) has biased composition (gly residues). Residues 165–193 (KMFQDANFPDNILEAIAKLGFTEPTPIQA) carry the Q motif motif. Residues 196-371 (WPMALKGRDL…RQFLRDPYKA (176 aa)) enclose the Helicase ATP-binding domain. Residue 209–216 (AETGSGKT) participates in ATP binding. The DEAD box motif lies at 319–322 (DEAD). The Helicase C-terminal domain occupies 399–544 (RLLTLLKQLM…VVPPTLSALV (146 aa)). The tract at residues 547 to 591 (SGSGYGGSGGGRNFRPRGGGRGGGFGDKRSRSTSNFVPHGGKRTW) is disordered. Gly residues predominate over residues 549 to 571 (SGYGGSGGGRNFRPRGGGRGGGF).

This sequence belongs to the DEAD box helicase family. DDX5/DBP2 subfamily.

It is found in the nucleus. It carries out the reaction ATP + H2O = ADP + phosphate + H(+). ATP-dependent RNA helicase involved nonsense-mediated mRNA decay and ribosome biogenesis through rRNA processing. In Arabidopsis thaliana (Mouse-ear cress), this protein is DEAD-box ATP-dependent RNA helicase 30 (RH30).